Here is a 295-residue protein sequence, read N- to C-terminus: Protein PHR1-LIKE 2 (295 aa).

An HTH myb-type domain is found at 38 to 98 (TDPKPRLRWT…HLQKFRLGRQ (61 aa)). Residues 69-94 (PKTIMRTMGVKGLTLYHLKSHLQKFR) constitute a DNA-binding region (H-T-H motif). Positions 96-138 (GRQAGKESTENSKDASCVGESQDTGSSSTSSMRMAQQEQNEGY) are disordered. Residues 99–108 (AGKESTENSK) are compositionally biased toward basic and acidic residues. Polar residues predominate over residues 127 to 138 (MRMAQQEQNEGY). Positions 141 to 161 (TEALRAQMEVQRRLHDQLEVQ) form a coiled coil. Residues 154–159 (LHDQLE) carry the LHEQLE motif.

It belongs to the MYB-CC family. As to quaternary structure, homo- and heterodimers. Interacts with PHL3, but not with PHR1.

It localises to the nucleus. Its function is as follows. Transcriptional activator. Acts redundantly with PHR1 as a key component of the central regulatory system controlling transcriptional responses to Pi starvation. Binds in a sequence-specific manner to phosphate starvation-regulated promoters. In Arabidopsis thaliana (Mouse-ear cress), this protein is Protein PHR1-LIKE 2.